The primary structure comprises 476 residues: ATP synthase subunit beta (476 aa).

154-161 (GGAGVGKT) serves as a coordination point for ATP.

It belongs to the ATPase alpha/beta chains family. F-type ATPases have 2 components, CF(1) - the catalytic core - and CF(0) - the membrane proton channel. CF(1) has five subunits: alpha(3), beta(3), gamma(1), delta(1), epsilon(1). CF(0) has three main subunits: a(1), b(2) and c(9-12). The alpha and beta chains form an alternating ring which encloses part of the gamma chain. CF(1) is attached to CF(0) by a central stalk formed by the gamma and epsilon chains, while a peripheral stalk is formed by the delta and b chains.

Its subcellular location is the cell inner membrane. The catalysed reaction is ATP + H2O + 4 H(+)(in) = ADP + phosphate + 5 H(+)(out). Functionally, produces ATP from ADP in the presence of a proton gradient across the membrane. The catalytic sites are hosted primarily by the beta subunits. This Nitrobacter hamburgensis (strain DSM 10229 / NCIMB 13809 / X14) protein is ATP synthase subunit beta.